Consider the following 41-residue polypeptide: Large ribosomal subunit protein bL36 (41 aa).

Belongs to the bacterial ribosomal protein bL36 family.

The chain is Large ribosomal subunit protein bL36 from Dinoroseobacter shibae (strain DSM 16493 / NCIMB 14021 / DFL 12).